A 311-amino-acid chain; its full sequence is Malate dehydrogenase (311 aa).

NAD(+) contacts are provided by residues 7 to 13 and Asp34; that span reads GAAGGIG. Arg81 and Arg87 together coordinate substrate. NAD(+) contacts are provided by residues Asn94 and 117 to 119; that span reads ITN. Asn119 and Arg153 together coordinate substrate. Residue His177 is the Proton acceptor of the active site. Met227 lines the NAD(+) pocket.

The protein belongs to the LDH/MDH superfamily. MDH type 1 family. In terms of assembly, homodimer.

It carries out the reaction (S)-malate + NAD(+) = oxaloacetate + NADH + H(+). Functionally, catalyzes the reversible oxidation of malate to oxaloacetate. This chain is Malate dehydrogenase, found in Vibrio parahaemolyticus serotype O3:K6 (strain RIMD 2210633).